Consider the following 392-residue polypeptide: Putative transactivator/viroplasmin protein (392 aa).

Positions methionine 1–asparagine 88 form a coiled coil. The disordered stretch occupies residues glutamate 358 to threonine 392.

It belongs to the caulimoviridae viroplasmin family.

Its subcellular location is the host cytoplasm. Enhances the translation of downstream ORFs on polycistronic mRNAs derived from cassava vein mosaic virus. The polypeptide is Putative transactivator/viroplasmin protein (Cassava vein mosaic virus (CsVMV)).